Here is a 224-residue protein sequence, read N- to C-terminus: Phosphoglycolate phosphatase (224 aa).

Asp8 functions as the Nucleophile in the catalytic mechanism. Positions 8, 10, 11, and 43 each coordinate Mg(2+). Lys151 serves as a coordination point for substrate. Mg(2+) contacts are provided by Asp174, Ser175, and Asp178.

The protein belongs to the HAD-like hydrolase superfamily. Archaeal SPP-like hydrolase family. As to quaternary structure, homodimer. The cofactor is Mg(2+).

It catalyses the reaction 2-phosphoglycolate + H2O = glycolate + phosphate. With respect to regulation, inhibited by Ca(2+) ions and by high chloride ion concentration. By contrast, low chloride concentration (up to 50 mM) slightly activate the enzyme. Functionally, catalyzes the dephosphorylation of 2-phosphoglycolate. Also has significant, but less efficient, pyrophosphatase activity, since it is able to catalyze the release of phosphate from inorganic pyrophosphate (PPi). The chain is Phosphoglycolate phosphatase from Thermoplasma acidophilum (strain ATCC 25905 / DSM 1728 / JCM 9062 / NBRC 15155 / AMRC-C165).